Consider the following 140-residue polypeptide: Nucleoside diphosphate kinase (140 aa).

Lys11, Phe59, Arg87, Thr93, Arg104, and Asn114 together coordinate ATP. Residue His117 is the Pros-phosphohistidine intermediate of the active site.

This sequence belongs to the NDK family. As to quaternary structure, homotetramer. It depends on Mg(2+) as a cofactor.

The protein resides in the cytoplasm. The enzyme catalyses a 2'-deoxyribonucleoside 5'-diphosphate + ATP = a 2'-deoxyribonucleoside 5'-triphosphate + ADP. It catalyses the reaction a ribonucleoside 5'-diphosphate + ATP = a ribonucleoside 5'-triphosphate + ADP. In terms of biological role, major role in the synthesis of nucleoside triphosphates other than ATP. The ATP gamma phosphate is transferred to the NDP beta phosphate via a ping-pong mechanism, using a phosphorylated active-site intermediate. The protein is Nucleoside diphosphate kinase of Sinorhizobium medicae (strain WSM419) (Ensifer medicae).